An 89-amino-acid chain; its full sequence is LYR motif-containing protein 4 (89 aa).

The protein belongs to the complex I LYR family.

Its subcellular location is the mitochondrion. The protein resides in the nucleus. It participates in cofactor biosynthesis; iron-sulfur cluster biosynthesis. Functionally, required for nuclear and mitochondrial iron-sulfur protein biosynthesis. In Xenopus laevis (African clawed frog), this protein is LYR motif-containing protein 4 (lyrm4).